Here is a 428-residue protein sequence, read N- to C-terminus: Enolase (428 aa).

Gln163 is a (2R)-2-phosphoglycerate binding site. Residue Glu205 is the Proton donor of the active site. Residues Asp242, Glu285, and Asp312 each coordinate Mg(2+). (2R)-2-phosphoglycerate is bound by residues Lys337, Arg366, Ser367, and Lys388. Lys337 (proton acceptor) is an active-site residue.

Belongs to the enolase family. The cofactor is Mg(2+).

Its subcellular location is the cytoplasm. It is found in the secreted. The protein resides in the cell surface. The enzyme catalyses (2R)-2-phosphoglycerate = phosphoenolpyruvate + H2O. It functions in the pathway carbohydrate degradation; glycolysis; pyruvate from D-glyceraldehyde 3-phosphate: step 4/5. In terms of biological role, catalyzes the reversible conversion of 2-phosphoglycerate (2-PG) into phosphoenolpyruvate (PEP). It is essential for the degradation of carbohydrates via glycolysis. The protein is Enolase of Neisseria gonorrhoeae (strain ATCC 700825 / FA 1090).